Consider the following 683-residue polypeptide: Elongation factor G 2 (683 aa).

In terms of domain architecture, tr-type G spans 4–279 (QQMRNIGIMA…AVVEYLPAPQ (276 aa)). GTP is bound by residues 13–20 (AHVDAGKT), 77–81 (DTPGH), and 131–134 (NKMD).

Belongs to the TRAFAC class translation factor GTPase superfamily. Classic translation factor GTPase family. EF-G/EF-2 subfamily.

The protein localises to the cytoplasm. Catalyzes the GTP-dependent ribosomal translocation step during translation elongation. During this step, the ribosome changes from the pre-translocational (PRE) to the post-translocational (POST) state as the newly formed A-site-bound peptidyl-tRNA and P-site-bound deacylated tRNA move to the P and E sites, respectively. Catalyzes the coordinated movement of the two tRNA molecules, the mRNA and conformational changes in the ribosome. This chain is Elongation factor G 2 (fusB), found in Treponema pallidum (strain Nichols).